The chain runs to 324 residues: Polycomb complex protein BMI-1-B (324 aa).

The RING-type zinc finger occupies 18–57 (CVLCGGYFIDATTIVECLHSFCKMCIVRYLETSKYCPICD). A Nuclear localization signal motif is present at residues 81–95 (KLVPGLFKNEMKRRR). The disordered stretch occupies residues 232–324 (IKLSSPRNDM…TSHNGSNSLG (93 aa)). Over residues 256–279 (DKPNSPSIVAAPSTSSSMPSPNTP) the composition is skewed to low complexity. 2 stretches are compositionally biased toward polar residues: residues 280-295 (VQSTHPSFPHISTING) and 303-324 (NGQTPFSSKVCKTSHNGSNSLG).

In terms of assembly, component of a PRC1-like complex. Homodimer. Interacts with cbx2.

Its subcellular location is the nucleus. In terms of biological role, component of a Polycomb group (PcG) multiprotein PRC1-like complex, a complex class required to maintain the transcriptionally repressive state of many genes, including Hox genes, throughout development. PcG PRC1 complex acts via chromatin remodeling and modification of histones; it mediates monoubiquitination of histone H2A 'Lys-119', rendering chromatin heritably changed in its expressibility. In the PRC1 complex, it is required to stimulate the E3 ubiquitin-protein ligase activity of rnf2. This chain is Polycomb complex protein BMI-1-B (bmi1b), found in Danio rerio (Zebrafish).